We begin with the raw amino-acid sequence, 537 residues long: Tyrosine-protein kinase Yes (537 aa).

Over residues 1-22 (MGCIKSKEDKGPSIKYRTEPKP) the composition is skewed to basic and acidic residues. The tract at residues 1 to 60 (MGCIKSKEDKGPSIKYRTEPKPDPGSQYGADPTQATQSPGIKGPAPNFNSHSMTPFGGSS) is disordered. Residue Gly-2 is the site of N-myristoyl glycine attachment. Cys-3 is lipidated: S-palmitoyl cysteine; in membrane form. In terms of domain architecture, SH3 spans 85-146 (GGVTVFVALY…PSNYVAPADS (62 aa)). In terms of domain architecture, SH2 spans 152 to 249 (WYFGKMGRKD…GLCYRLTTVC (98 aa)). Residues 271–524 (LRLDVKLGQG…YIQSFLEDYF (254 aa)) form the Protein kinase domain. Residues 277-285 (LGQGCFGEV) and Lys-299 contribute to the ATP site. Asp-390 (proton acceptor) is an active-site residue. Tyr-420 carries the phosphotyrosine; by autocatalysis modification. Tyr-531 is modified (phosphotyrosine; by CSK).

This sequence belongs to the protein kinase superfamily. Tyr protein kinase family. SRC subfamily. In terms of processing, autophosphorylated at Tyr-420 inducing activation. Palmitoylation at Cys-3 promotes membrane localization.

The protein resides in the cell membrane. The protein localises to the cytoplasm. It is found in the cytoskeleton. It localises to the microtubule organizing center. Its subcellular location is the centrosome. The protein resides in the cytosol. The protein localises to the cell junction. It carries out the reaction L-tyrosyl-[protein] + ATP = O-phospho-L-tyrosyl-[protein] + ADP + H(+). Non-receptor protein tyrosine kinase that is involved in the regulation of cell growth and survival, apoptosis, cell-cell adhesion, cytoskeleton remodeling, differentiation, G2/M progression and cytokinesis. In Xenopus laevis (African clawed frog), this protein is Tyrosine-protein kinase Yes (yes1).